The following is a 1052-amino-acid chain: Membrane-bound transcription factor site-1 protease (1052 aa).

Positions 1 to 17 (MKLVNIWLLLLVVLLCG) are cleaved as a signal peptide. Positions 18–186 (KKHLGDRLGK…TGRHSSRRLL (169 aa)) are excised as a propeptide. Residue Asn148 is glycosylated (N-linked (GlcNAc...) asparagine). Residue Ser168 is modified to Phosphoserine. The Lumenal portion of the chain corresponds to 187 to 999 (RAIPRQVAQT…MPGRYNQEVG (813 aa)). The region spanning 190 to 472 (PRQVAQTLQA…HGKLDLLRAY (283 aa)) is the Peptidase S8 domain. Asp218 (charge relay system) is an active-site residue. N-linked (GlcNAc...) asparagine glycosylation is present at Asn236. Catalysis depends on His249, which acts as the Charge relay system. Asn305 carries an N-linked (GlcNAc...) asparagine glycan. The Charge relay system role is filled by Ser414. N-linked (GlcNAc...) asparagine glycans are attached at residues Asn515 and Asn728. The segment covering 877-887 (PSLSHSGNRQR) has biased composition (polar residues). The interval 877 to 900 (PSLSHSGNRQRPPSGAGLAPPERM) is disordered. Asn939 is a glycosylation site (N-linked (GlcNAc...) asparagine). Residues 1000–1022 (QTIPVFAFLGAMVALAFFVVQIS) form a helical membrane-spanning segment. Residues 1023–1052 (KAKSRPKRRRPRAKRPQLAQQAHPARTPSV) lie on the Cytoplasmic side of the membrane. Positions 1026–1037 (SRPKRRRPRAKR) are enriched in basic residues. The disordered stretch occupies residues 1026–1052 (SRPKRRRPRAKRPQLAQQAHPARTPSV).

Belongs to the peptidase S8 family. As to quaternary structure, interacts with LYSET; this interaction bridges GNPTAB to MBTPS1. Requires Ca(2+) as cofactor. Post-translationally, the 148 kDa zymogen is processed progressively into two membrane-bound 120 and 106 kDa forms in the endoplasmic reticulum, and late into a secreted 98 kDa form. The propeptide is autocatalytically removed through an intramolecular cleavage after Leu-186. Further cleavage generates 14, 10, and 8 kDa intermediates. In terms of tissue distribution, widely expressed. In adult rat, highly expressed in anterior pituitary, thyroid and adrenal glands and in liver. In 2-day old rat, detected in developing skin, striated muscles, cardiac muscles, bones, teeth and internal organs. Highly expressed in retina, cerebellum, pituitary, submaxillary, thyroid and adrenal glands, molars, thymus, kidney and intestine.

It is found in the endoplasmic reticulum membrane. The protein localises to the golgi apparatus membrane. It catalyses the reaction Processes precursors containing basic and hydrophobic/aliphatic residues at P4 and P2, respectively, with a relatively relaxed acceptance of amino acids at P1 and P3.. Inhibited by divalent copper and zinc ions, but not by nickel or cobalt. Inhibited by its prosegment, but not smaller fragments. Inhibited by 4-(2-aminoethyl)benzenesulfonyl fluoride (AEBSF), a serine protease inhibitor. Serine protease that cleaves after hydrophobic or small residues, provided that Arg or Lys is in position P4: known substrates include SREBF1/SREBP1, SREBF2/SREBP2, BDNF, GNPTAB, ATF6, ATF6B and FAM20C. Cleaves substrates after Arg-Ser-Val-Leu (SREBP2), Arg-His-Leu-Leu (ATF6), Arg-Gly-Leu-Thr (BDNF) and its own propeptide after Arg-Arg-Leu-Leu. Catalyzes the first step in the proteolytic activation of the sterol regulatory element-binding proteins (SREBPs) SREBF1/SREBP1 and SREBF2/SREBP2. Also mediates the first step in the proteolytic activation of the cyclic AMP-dependent transcription factor ATF-6 (ATF6 and ATF6B). Mediates the protein cleavage of GNPTAB into subunit alpha and beta, thereby participating in biogenesis of lysosomes. Cleaves the propeptide from FAM20C which is required for FAM20C secretion from the Golgi apparatus membrane and for enhancement of FAM20C kinase activity, promoting osteoblast differentiation and biomineralization. Involved in the regulation of M6P-dependent Golgi-to-lysosome trafficking of lysosomal enzymes. It is required for the activation of CREB3L2/BBF2H7, a transcriptional activator of MIA3/TANGO and other genes controlling mega vesicle formation. Therefore, it plays a key role in the regulation of mega vesicle-mediated collagen trafficking. In astrocytes and osteoblasts, upon DNA damage and ER stress, mediates the first step of the regulated intramembrane proteolytic activation of the transcription factor CREB3L1, leading to the inhibition of cell-cycle progression. This is Membrane-bound transcription factor site-1 protease (Mbtps1) from Rattus norvegicus (Rat).